A 259-amino-acid polypeptide reads, in one-letter code: Expansin-B4 (259 aa).

A signal peptide spans 1–23; that stretch reads MASSQRYFALLALFAVSLKFCYC. Asn25 carries N-linked (GlcNAc...) asparagine glycosylation. Residues 51 to 161 enclose the Expansin-like EG45 domain; that stretch reads GGACGYGSAV…KRAACLYRGT (111 aa). 3 cysteine pairs are disulfide-bonded: Cys54–Cys83, Cys86–Cys156, and Cys91–Cys97. One can recognise an Expansin-like CBD domain in the interval 174–255; it reads YYISFVVEYE…NWKPDESYRS (82 aa).

Belongs to the expansin family. Expansin B subfamily.

The protein resides in the secreted. It is found in the cell wall. The protein localises to the membrane. May cause loosening and extension of plant cell walls by disrupting non-covalent bonding between cellulose microfibrils and matrix glucans. No enzymatic activity has been found. This Arabidopsis thaliana (Mouse-ear cress) protein is Expansin-B4 (EXPB4).